Consider the following 164-residue polypeptide: uncharacterized protein (164 aa).

An N-terminal signal peptide occupies residues 1 to 25 (MMKTVKHLLCCAIAASALISTGVHA).

This is an uncharacterized protein from Escherichia coli (strain K12).